Reading from the N-terminus, the 225-residue chain is Lipoarabinomannan carrier protein LprG (225 aa).

Residues 1–21 (MRNRIRLALIPVAVAAIALAG) form the signal peptide. Cys-22 carries N-palmitoyl cysteine lipidation. Residue Cys-22 is the site of S-diacylglycerol cysteine attachment.

It belongs to the LppX/LprAFG lipoprotein family. In terms of processing, modified by Lgt on Cys-22 with an S-linked diacylglyceral, signal peptide is removed by LspA, Cys-22 is further modifed with a fatty acid on its amino group by Lnt yielding a triacylated protein.

The protein resides in the cell inner membrane. In terms of biological role, helps membrane protein MAB_2807 (P55) transport triacylglycerides (TAG) across the inner cell membrane into the periplasm and probably ultimately to the outer membrane. Binds TAG in its hydrophobic cavity and transfers it between lipid bilayers. TAG probably regulates lipid metabolism and growth regulation and plays a structural role in the outer membrane. Also binds mannosides, lipoarabinomannan and lipomannan and various glycolipids in the same cavity. The polypeptide is Lipoarabinomannan carrier protein LprG (Mycobacteroides abscessus (strain ATCC 19977 / DSM 44196 / CCUG 20993 / CIP 104536 / JCM 13569 / NCTC 13031 / TMC 1543 / L948) (Mycobacterium abscessus)).